A 527-amino-acid chain; its full sequence is Tyrosine--tRNA ligase, cytoplasmic (527 aa).

L-tyrosine is bound at residue Tyr39. The short motif at 44–52 (TTGKPHVAY) is the 'HIGH' region element. L-tyrosine-binding residues include Tyr166, Gln170, Asp173, and Gln188. Positions 222–226 (KMSSS) match the 'KMSKS' region motif. Positions 242 to 247 (KKKLKK) match the Nuclear localization signal motif. Residues 337–362 (TNAAYPNPSKAKPAEKGTKNSEPETI) form a disordered region. Positions 348–358 (KPAEKGTKNSE) are enriched in basic and acidic residues. The tRNA-binding domain maps to 363–467 (VPSRLDIRVG…AECCAGERVY (105 aa)).

It belongs to the class-I aminoacyl-tRNA synthetase family. As to quaternary structure, homodimer.

It is found in the cytoplasm. It localises to the nucleus. It carries out the reaction tRNA(Tyr) + L-tyrosine + ATP = L-tyrosyl-tRNA(Tyr) + AMP + diphosphate + H(+). Catalyzes the attachment of tyrosine to tRNA(Tyr) in a two-step reaction: tyrosine is first activated by ATP to form Tyr-AMP and then transferred to the acceptor end of tRNA(Tyr). The protein is Tyrosine--tRNA ligase, cytoplasmic (YARS1) of Gallus gallus (Chicken).